Reading from the N-terminus, the 404-residue chain is uncharacterized protein (404 aa).

Transmembrane regions (helical) follow at residues 16-36, 49-69, 79-99, 110-130, 133-153, 166-186, 221-241, 252-272, 283-303, 307-327, 342-362, and 364-384; these read FAFFAAGFNTFAILYCVQPLM, AASLSLSVTTMLLAVSMLVFG, PIMGISMLAASVLCLASAFSP, IQGVALAGLPSIAMAYLGEEI, GSLGSAMGLYISGNAIGAVFG, WHMAMGTIGVISLIASVIFFI, FLIGFLLLGSNVALFNYIVYV, AFSSWIFIVMIVGIFSSSFIG, ILVMNIFIVIAGALFTINNML, ILGIALFTFGFFGGHSVASSW, LYLFFYYAGSSVFGTIGGLFW, and GFHWLGVVGMITFMLLVALWL.

This sequence belongs to the major facilitator superfamily.

Its subcellular location is the cell membrane. This is an uncharacterized protein from Bacillus subtilis (strain 168).